The primary structure comprises 446 residues: Chromosomal replication initiator protein DnaA (446 aa).

The interval 1 to 92 (MENISDLWNS…SQAEEEIDLP (92 aa)) is domain I, interacts with DnaA modulators. The tract at residues 93–109 (PAKPNAAQDDSNHLPQS) is domain II. Residues 110 to 326 (MLNPKYTFDT…GALIRVVAYS (217 aa)) form a domain III, AAA+ region region. ATP is bound by residues G154, G156, K157, and T158. The interval 327-446 (SLINKDINAD…QVEEINDILK (120 aa)) is domain IV, binds dsDNA.

The protein belongs to the DnaA family. In terms of assembly, oligomerizes as a right-handed, spiral filament on DNA at oriC.

It is found in the cytoplasm. Plays an essential role in the initiation and regulation of chromosomal replication. ATP-DnaA binds to the origin of replication (oriC) to initiate formation of the DNA replication initiation complex once per cell cycle. Binds the DnaA box (a 9 base pair repeat at the origin) and separates the double-stranded (ds)DNA. Forms a right-handed helical filament on oriC DNA; dsDNA binds to the exterior of the filament while single-stranded (ss)DNA is stabiized in the filament's interior. The ATP-DnaA-oriC complex binds and stabilizes one strand of the AT-rich DNA unwinding element (DUE), permitting loading of DNA polymerase. After initiation quickly degrades to an ADP-DnaA complex that is not apt for DNA replication. Binds acidic phospholipids. This Bacillus anthracis (strain A0248) protein is Chromosomal replication initiator protein DnaA.